A 554-amino-acid polypeptide reads, in one-letter code: Afadin- and alpha-actinin-binding protein A (554 aa).

Coiled-coil stretches lie at residues 122-287 and 359-449; these read LEYL…SQRK and ENGL…AIRL. The disordered stretch occupies residues 508-528; the sequence is LASSGDYSRRPSKALPITSSS.

The protein belongs to the ADIP family. Interacts with WRAP73.

It localises to the cell junction. The protein localises to the adherens junction. Its subcellular location is the cytoplasm. The protein resides in the cytoskeleton. It is found in the microtubule organizing center. It localises to the centrosome. The protein localises to the centriolar satellite. Belongs to an adhesion system, which plays a role in the organization of homotypic, interneuronal and heterotypic cell-cell adherens junctions (AJs). Involved in cell movement. Acts as a centrosome maturation factor, probably by maintaining the integrity of the pericentriolar material and proper microtubule nucleation at mitotic spindle poles. The function seems to implicate at least in part WRAP73; the SSX2IP:WRAP73 complex is proposed to act as regulator of spindle anchoring at the mitotic centrosome. The chain is Afadin- and alpha-actinin-binding protein A (ssx2ip-a) from Xenopus laevis (African clawed frog).